The primary structure comprises 132 residues: Large ribosomal subunit protein uL24 (132 aa).

Belongs to the universal ribosomal protein uL24 family. As to quaternary structure, part of the 50S ribosomal subunit.

In terms of biological role, one of two assembly initiator proteins, it binds directly to the 5'-end of the 23S rRNA, where it nucleates assembly of the 50S subunit. Its function is as follows. One of the proteins that surrounds the polypeptide exit tunnel on the outside of the subunit. This Synechococcus sp. (strain JA-3-3Ab) (Cyanobacteria bacterium Yellowstone A-Prime) protein is Large ribosomal subunit protein uL24.